Reading from the N-terminus, the 28-residue chain is Somatostatin-2 (28 aa).

Cysteine 17 and cysteine 28 are joined by a disulfide.

The protein belongs to the somatostatin family.

It localises to the secreted. Its function is as follows. Somatostatin inhibits the release of somatotropin. This chain is Somatostatin-2 (sst2), found in Oreochromis niloticus (Nile tilapia).